We begin with the raw amino-acid sequence, 142 residues long: Ribosome-binding factor A (142 aa).

The disordered stretch occupies residues 118–142 (DKNGDAEVDDTQVDDEPSVDSEKGE). Residues 123-136 (AEVDDTQVDDEPSV) show a composition bias toward acidic residues.

It belongs to the RbfA family. As to quaternary structure, monomer. Binds 30S ribosomal subunits, but not 50S ribosomal subunits or 70S ribosomes.

It localises to the cytoplasm. Its function is as follows. One of several proteins that assist in the late maturation steps of the functional core of the 30S ribosomal subunit. Associates with free 30S ribosomal subunits (but not with 30S subunits that are part of 70S ribosomes or polysomes). Required for efficient processing of 16S rRNA. May interact with the 5'-terminal helix region of 16S rRNA. The chain is Ribosome-binding factor A from Colwellia psychrerythraea (strain 34H / ATCC BAA-681) (Vibrio psychroerythus).